The following is a 382-amino-acid chain: D-alanine--D-alanine ligase (382 aa).

Residues 161-372 (KVVFESAGLH…YAELIDELIH (212 aa)) form the ATP-grasp domain. ATP is bound at residue 193 to 248 (VDRLGFPVFVKPARAGSSMGISKVDSLEGLDAAIEEARRHDLKLVIEAGIVGREIE). Mg(2+)-binding residues include D326, E339, and N341.

The protein belongs to the D-alanine--D-alanine ligase family. Mg(2+) is required as a cofactor. Mn(2+) serves as cofactor.

The protein localises to the cytoplasm. The enzyme catalyses 2 D-alanine + ATP = D-alanyl-D-alanine + ADP + phosphate + H(+). It functions in the pathway cell wall biogenesis; peptidoglycan biosynthesis. Its function is as follows. Cell wall formation. The chain is D-alanine--D-alanine ligase from Pseudarthrobacter chlorophenolicus (strain ATCC 700700 / DSM 12829 / CIP 107037 / JCM 12360 / KCTC 9906 / NCIMB 13794 / A6) (Arthrobacter chlorophenolicus).